The sequence spans 474 residues: Gamma-aminobutyric acid receptor subunit beta-1 (474 aa).

An N-terminal signal peptide occupies residues 1–25 (MWTVQNRESLGLLSFPVMITMVCCA). Residues 26–245 (HSTNEPSNMS…SFRLKRNIGY (220 aa)) lie on the Extracellular side of the membrane. Asn105 carries N-linked (GlcNAc...) asparagine glycosylation. A histamine-binding site is contributed by Tyr122. Cys161 and Cys175 are disulfide-bonded. Asn174 carries an N-linked (GlcNAc...) asparagine glycan. Histamine contacts are provided by residues 181–182 (SY) and Thr227. Tyr182 and Thr227 together coordinate 4-aminobutanoate. The next 3 helical transmembrane spans lie at 246-267 (FILQ…SFWI), 271-293 (ASAA…STHL), and 305-327 (AIDI…YAFV). Topologically, residues 328–451 (NYIFFGKGPQ…DLTDVNSIDK (124 aa)) are cytoplasmic. The chain crosses the membrane as a helical span at residues 452-473 (WSRMFFPITFSLFNVVYWLYYV).

The protein belongs to the ligand-gated ion channel (TC 1.A.9) family. Gamma-aminobutyric acid receptor (TC 1.A.9.5) subfamily. GABRB1 sub-subfamily. In terms of assembly, heteropentamer, formed by a combination of alpha (GABRA1-6), beta (GABRB1-3), gamma (GABRG1-3), delta (GABRD), epsilon (GABRE), rho (GABRR1-3), pi (GABRP) and theta (GABRQ) chains, each subunit exhibiting distinct physiological and pharmacological properties. Binds UBQLN1.

Its subcellular location is the postsynaptic cell membrane. The protein resides in the cell membrane. The catalysed reaction is chloride(in) = chloride(out). With respect to regulation, potentiated by etomidate, propofol, pregnanolone and flurazepam. Potentiated by histamine. Beta subunit of the heteropentameric ligand-gated chloride channel gated by gamma-aminobutyric acid (GABA), a major inhibitory neurotransmitter in the brain. GABA-gated chloride channels, also named GABA(A) receptors (GABAAR), consist of five subunits arranged around a central pore and contain one or two GABA active binding sites located at the alpha and beta subunit interfaces, depending on subunit composition. When activated by GABA, GABAARs selectively allow the flow of chloride anions across the cell membrane down their electrochemical gradient. Chloride influx into the postsynaptic neuron following GABAAR opening decreases the neuron ability to generate a new action potential, thereby reducing nerve transmission. Beta-containing GABAARs can simultaneously bind GABA and histamine where histamine binds at the interface of two neighboring beta subunits, which may be involved in the regulation of sleep and wakefulness. The protein is Gamma-aminobutyric acid receptor subunit beta-1 of Homo sapiens (Human).